A 208-amino-acid chain; its full sequence is Protein-L-isoaspartate O-methyltransferase (208 aa).

Ser59 is a catalytic residue.

This sequence belongs to the methyltransferase superfamily. L-isoaspartyl/D-aspartyl protein methyltransferase family.

It localises to the cytoplasm. It catalyses the reaction [protein]-L-isoaspartate + S-adenosyl-L-methionine = [protein]-L-isoaspartate alpha-methyl ester + S-adenosyl-L-homocysteine. Catalyzes the methyl esterification of L-isoaspartyl residues in peptides and proteins that result from spontaneous decomposition of normal L-aspartyl and L-asparaginyl residues. It plays a role in the repair and/or degradation of damaged proteins. In Salmonella newport (strain SL254), this protein is Protein-L-isoaspartate O-methyltransferase.